The sequence spans 464 residues: Cysteine--tRNA ligase (464 aa).

Cys32 provides a ligand contact to Zn(2+). The 'HIGH' region signature appears at 34-44; the sequence is VTVYDDCHIGH. 3 residues coordinate Zn(2+): Cys213, His238, and Glu242. Positions 270–274 match the 'KMSKS' region motif; the sequence is KMSKS. Lys273 is a binding site for ATP.

Belongs to the class-I aminoacyl-tRNA synthetase family. Monomer. Requires Zn(2+) as cofactor.

It is found in the cytoplasm. It carries out the reaction tRNA(Cys) + L-cysteine + ATP = L-cysteinyl-tRNA(Cys) + AMP + diphosphate. The polypeptide is Cysteine--tRNA ligase (Francisella tularensis subsp. holarctica (strain LVS)).